The chain runs to 72 residues: Male-specific sperm protein Mst84Dd (72 aa).

This sequence belongs to the MST(3)CGP family. In terms of tissue distribution, testis.

This Drosophila melanogaster (Fruit fly) protein is Male-specific sperm protein Mst84Dd (Mst84Dd).